The following is a 362-amino-acid chain: UDP-N-acetylglucosamine--N-acetylmuramyl-(pentapeptide) pyrophosphoryl-undecaprenol N-acetylglucosamine transferase (362 aa).

Residues 10-12 (TAG), asparagine 124, arginine 161, serine 195, and glutamine 291 each bind UDP-N-acetyl-alpha-D-glucosamine.

This sequence belongs to the glycosyltransferase 28 family. MurG subfamily.

It localises to the cell membrane. It carries out the reaction di-trans,octa-cis-undecaprenyl diphospho-N-acetyl-alpha-D-muramoyl-L-alanyl-D-glutamyl-meso-2,6-diaminopimeloyl-D-alanyl-D-alanine + UDP-N-acetyl-alpha-D-glucosamine = di-trans,octa-cis-undecaprenyl diphospho-[N-acetyl-alpha-D-glucosaminyl-(1-&gt;4)]-N-acetyl-alpha-D-muramoyl-L-alanyl-D-glutamyl-meso-2,6-diaminopimeloyl-D-alanyl-D-alanine + UDP + H(+). The protein operates within cell wall biogenesis; peptidoglycan biosynthesis. Its function is as follows. Cell wall formation. Catalyzes the transfer of a GlcNAc subunit on undecaprenyl-pyrophosphoryl-MurNAc-pentapeptide (lipid intermediate I) to form undecaprenyl-pyrophosphoryl-MurNAc-(pentapeptide)GlcNAc (lipid intermediate II). The sequence is that of UDP-N-acetylglucosamine--N-acetylmuramyl-(pentapeptide) pyrophosphoryl-undecaprenol N-acetylglucosamine transferase from Streptomyces collinus.